The sequence spans 573 residues: Proline--tRNA ligase (573 aa).

It belongs to the class-II aminoacyl-tRNA synthetase family. ProS type 1 subfamily. Homodimer.

It is found in the cytoplasm. It carries out the reaction tRNA(Pro) + L-proline + ATP = L-prolyl-tRNA(Pro) + AMP + diphosphate. Catalyzes the attachment of proline to tRNA(Pro) in a two-step reaction: proline is first activated by ATP to form Pro-AMP and then transferred to the acceptor end of tRNA(Pro). As ProRS can inadvertently accommodate and process non-cognate amino acids such as alanine and cysteine, to avoid such errors it has two additional distinct editing activities against alanine. One activity is designated as 'pretransfer' editing and involves the tRNA(Pro)-independent hydrolysis of activated Ala-AMP. The other activity is designated 'posttransfer' editing and involves deacylation of mischarged Ala-tRNA(Pro). The misacylated Cys-tRNA(Pro) is not edited by ProRS. This Citrifermentans bemidjiense (strain ATCC BAA-1014 / DSM 16622 / JCM 12645 / Bem) (Geobacter bemidjiensis) protein is Proline--tRNA ligase.